A 374-amino-acid chain; its full sequence is Transaldolase (374 aa).

Residue Lys140 is the Schiff-base intermediate with substrate of the active site.

This sequence belongs to the transaldolase family. Type 2 subfamily.

It localises to the cytoplasm. It carries out the reaction D-sedoheptulose 7-phosphate + D-glyceraldehyde 3-phosphate = D-erythrose 4-phosphate + beta-D-fructose 6-phosphate. It participates in carbohydrate degradation; pentose phosphate pathway; D-glyceraldehyde 3-phosphate and beta-D-fructose 6-phosphate from D-ribose 5-phosphate and D-xylulose 5-phosphate (non-oxidative stage): step 2/3. In terms of biological role, transaldolase is important for the balance of metabolites in the pentose-phosphate pathway. The polypeptide is Transaldolase (Renibacterium salmoninarum (strain ATCC 33209 / DSM 20767 / JCM 11484 / NBRC 15589 / NCIMB 2235)).